The sequence spans 331 residues: Protein RecA (331 aa).

66–73 (GPESSGKT) lines the ATP pocket.

This sequence belongs to the RecA family.

Its subcellular location is the cytoplasm. Its function is as follows. Can catalyze the hydrolysis of ATP in the presence of single-stranded DNA, the ATP-dependent uptake of single-stranded DNA by duplex DNA, and the ATP-dependent hybridization of homologous single-stranded DNAs. It interacts with LexA causing its activation and leading to its autocatalytic cleavage. The polypeptide is Protein RecA (Lactobacillus delbrueckii subsp. bulgaricus (strain ATCC 11842 / DSM 20081 / BCRC 10696 / JCM 1002 / NBRC 13953 / NCIMB 11778 / NCTC 12712 / WDCM 00102 / Lb 14)).